We begin with the raw amino-acid sequence, 527 residues long: Ribonuclease Y (527 aa).

The helical transmembrane segment at 21 to 41 (ILAIFFSFIIGIVFGGMALFV) threads the bilayer. Residues 78–97 (READKTRNSAETELKERRSE) form a disordered region. Positions 217-302 (TTNVVPLPSD…EVVTKAKEEV (86 aa)) constitute a KH domain. Residues 343 to 436 (VLQHSIEVAQ…VSAADAISSA (94 aa)) form the HD domain.

Belongs to the RNase Y family.

It is found in the cell membrane. Endoribonuclease that initiates mRNA decay. The protein is Ribonuclease Y of Dehalococcoides mccartyi (strain ATCC BAA-2100 / JCM 16839 / KCTC 5957 / BAV1).